A 966-amino-acid chain; its full sequence is Muscular LMNA-interacting protein (966 aa).

Serine 129 carries the post-translational modification Phosphoserine. Disordered stretches follow at residues 132–154, 182–207, 303–337, 354–388, 434–562, 597–684, 785–837, and 929–966; these read EDEA…IATR, SHPE…TSEQ, LAPE…SLRS, PSPK…LKSP, IKQT…TRPS, KRTC…TPSL, SMHS…SQLT, and SLRD…DSKE. Residues 144–810 form a required for interaction with ISL1 region; that stretch reads PPGATGNIAT…GSETIKTPTT (667 aa). Composition is skewed to polar residues over residues 195–207 and 325–337; these read KHGQ…TSEQ and TSPS…SLRS. 3 stretches are compositionally biased toward low complexity: residues 354–387, 437–455, and 478–497; these read PSPK…GLKS, TPST…TGST, and PLSQ…SYAA. The residue at position 486 (serine 486) is a Phosphoserine. Residues 507–521 are compositionally biased toward polar residues; the sequence is TLRSSTTPPQSQTDL. Basic and acidic residues-rich tracts occupy residues 542-555 and 597-607; these read GRKD…EKNR and KRTCSQRHSDQ. 2 stretches are compositionally biased toward polar residues: residues 639-649 and 657-684; these read SSLTQALQRSP and GSAT…TPSL. Over residues 785 to 797 the composition is skewed to low complexity; sequence SMHSSDSPSRPSQ. A Phosphoserine modification is found at serine 791. A compositionally biased stretch (polar residues) spans 798–810; that stretch reads TMLGSETIKTPTT. A compositionally biased stretch (low complexity) spans 825–834; sequence SSSSSTTSES. Residues 937–946 are compositionally biased toward polar residues; it reads SPTLLSQDTY. Basic and acidic residues predominate over residues 957-966; it reads PEHDTLDSKE.

In terms of assembly, directly interacts with LMNA. Interacts with ISL1 (via N-terminal domain); the interaction represses ISL1 transactivator activity. Interactions of ISL1 with MLIP1 and GCN5/KAT2A may be mutually exclusive. As to expression, expressed in cardiomyoctes. Expression is highly reduced in hypertrophic cardiomyocytes.

It localises to the nucleus. The protein resides in the nucleus envelope. Its subcellular location is the PML body. It is found in the cytoplasm. The protein localises to the cytosol. It localises to the cell membrane. The protein resides in the sarcolemma. Functionally, required for myoblast differentiation into myotubes, possibly acting as a transcriptional regulator of the myogenic program. Required for cardiac adaptation to stress through integrated regulation of the AKT/mTOR pathways and FOXO1. Regulates cardiac homeostasis and plays a role in the protection against cardiac hypertrophy. Binds chromatin. May act as a transcriptional cofactor for ISL1, repressing its transcriptional activity. May also repress MYOCD transcriptional activity. The chain is Muscular LMNA-interacting protein from Rattus norvegicus (Rat).